Consider the following 181-residue polypeptide: Large ribosomal subunit protein uL5 (181 aa).

It belongs to the universal ribosomal protein uL5 family. In terms of assembly, part of the 50S ribosomal subunit; part of the 5S rRNA/L5/L18/L25 subcomplex. Contacts the 5S rRNA and the P site tRNA. Forms a bridge to the 30S subunit in the 70S ribosome.

Its function is as follows. This is one of the proteins that bind and probably mediate the attachment of the 5S RNA into the large ribosomal subunit, where it forms part of the central protuberance. In the 70S ribosome it contacts protein S13 of the 30S subunit (bridge B1b), connecting the 2 subunits; this bridge is implicated in subunit movement. Contacts the P site tRNA; the 5S rRNA and some of its associated proteins might help stabilize positioning of ribosome-bound tRNAs. In Campylobacter hominis (strain ATCC BAA-381 / DSM 21671 / CCUG 45161 / LMG 19568 / NCTC 13146 / CH001A), this protein is Large ribosomal subunit protein uL5.